Consider the following 175-residue polypeptide: Adenine phosphoribosyltransferase (175 aa).

This sequence belongs to the purine/pyrimidine phosphoribosyltransferase family. As to quaternary structure, homodimer.

It is found in the cytoplasm. It catalyses the reaction AMP + diphosphate = 5-phospho-alpha-D-ribose 1-diphosphate + adenine. Its pathway is purine metabolism; AMP biosynthesis via salvage pathway; AMP from adenine: step 1/1. In terms of biological role, catalyzes a salvage reaction resulting in the formation of AMP, that is energically less costly than de novo synthesis. The sequence is that of Adenine phosphoribosyltransferase from Oenococcus oeni (strain ATCC BAA-331 / PSU-1).